A 730-amino-acid chain; its full sequence is Pheromone-processing carboxypeptidase KEX1 (730 aa).

The N-terminal stretch at methionine 1–glycine 19 is a signal peptide. Topologically, residues phenylalanine 20 to lysine 599 are lumenal. The N-linked (GlcNAc...) asparagine glycan is linked to asparagine 60. Active-site residues include serine 181, aspartate 376, and histidine 441. A disordered region spans residues serine 475 to aspartate 590. Over residues glutamate 486 to asparagine 497 the composition is skewed to basic and acidic residues. Asparagine 497 and asparagine 507 each carry an N-linked (GlcNAc...) asparagine glycan. Acidic residues predominate over residues glutamate 498 to aspartate 514. The span at glycine 515 to aspartate 526 shows a compositional bias: basic and acidic residues. Acidic residues-rich tracts occupy residues aspartate 527–aspartate 557 and asparagine 579–aspartate 590. A helical transmembrane segment spans residues alanine 600–serine 620. Topologically, residues aspartate 621 to histidine 730 are cytoplasmic. A disordered region spans residues glutamate 684–histidine 730. The segment covering lysine 699–lysine 709 has biased composition (basic residues). Residues aspartate 717 to histidine 730 show a composition bias toward acidic residues.

The protein belongs to the peptidase S10 family.

It localises to the golgi apparatus. The protein localises to the trans-Golgi network membrane. It catalyses the reaction Preferential release of a C-terminal arginine or lysine residue.. Protease with a carboxypeptidase B-like function involved in the C-terminal processing of the lysine and arginine residues from protein precursors. Promotes cell fusion and is involved in the programmed cell death. This Candida glabrata (strain ATCC 2001 / BCRC 20586 / JCM 3761 / NBRC 0622 / NRRL Y-65 / CBS 138) (Yeast) protein is Pheromone-processing carboxypeptidase KEX1 (KEX1).